The following is a 632-amino-acid chain: Chaperone protein DnaK (632 aa).

Thr-199 carries the post-translational modification Phosphothreonine; by autocatalysis. The segment covering 597–611 has biased composition (low complexity); the sequence is AAQQAGQAEGQAAQE. The tract at residues 597-632 is disordered; the sequence is AAQQAGQAEGQAAQEPSQSTGNAQAEATDAEYEEVK. The segment covering 612–621 has biased composition (polar residues); sequence PSQSTGNAQA.

This sequence belongs to the heat shock protein 70 family.

Functionally, acts as a chaperone. The chain is Chaperone protein DnaK from Amoebophilus asiaticus (strain 5a2).